Consider the following 254-residue polypeptide: MVTAAGSPSSSSARKPASRPRLPCRDILVHIEAYLSRRDGVDNLLKVSLYAARLALALAAGQPPLPHAATARLRSFESSVGLSRKAFRLGKFVQSINALRAAAYHPHPHVHPLLVLLAYGGQGVYNFLEQFAWLAKAGLLPARLLPRRLHRIGVWAQLLAHVGSIAIKLEEVAELECGVEARLEEGCGEESEVVRTLSRKLLLKLMSLVQDMVDSAMTVGDVTGRKGLLGSSTLMASAGLLSALISVHKNWNSC.

At 1-113 the chain is on the cytoplasmic side; the sequence is MVTAAGSPSS…YHPHPHVHPL (113 aa). A helical transmembrane segment spans residues 114–134; it reads LVLLAYGGQGVYNFLEQFAWL. The Lumenal segment spans residues 135–227; that stretch reads AKAGLLPARL…TVGDVTGRKG (93 aa). A helical membrane pass occupies residues 228-247; sequence LLGSSTLMASAGLLSALISV. The Cytoplasmic portion of the chain corresponds to 248–254; it reads HKNWNSC.

The protein belongs to the peroxin-11 family.

The protein localises to the peroxisome membrane. In terms of biological role, involved in peroxisomal proliferation. The polypeptide is Peroxisomal membrane protein 11-2 (PEX11-2) (Oryza sativa subsp. japonica (Rice)).